Here is a 355-residue protein sequence, read N- to C-terminus: Elongation factor Ts (355 aa).

Positions 82-85 are involved in Mg(2+) ion dislocation from EF-Tu; the sequence is TDFV.

The protein belongs to the EF-Ts family.

It localises to the cytoplasm. Associates with the EF-Tu.GDP complex and induces the exchange of GDP to GTP. It remains bound to the aminoacyl-tRNA.EF-Tu.GTP complex up to the GTP hydrolysis stage on the ribosome. In Helicobacter pylori (strain P12), this protein is Elongation factor Ts.